Reading from the N-terminus, the 560-residue chain is Phenol regulator MopR (560 aa).

Positions 106 and 134 each coordinate phenol. 4 residues coordinate Zn(2+): Cys-155, Glu-178, Cys-181, and Cys-189. One can recognise a Sigma-54 factor interaction domain in the interval 245–474; it reads AVGESVAYRK…LENLLERATL (230 aa). Residues 273-280 and 336-345 contribute to the ATP site; these read GETGVGKE and AHGGTIFLDE.

Homodimer.

Activity is triggered by phenol binding. Its function is as follows. Involved in the regulation of the phenol degradation pathway. Activates phenol hydroxylase expression in the presence of phenol. This is Phenol regulator MopR from Acinetobacter guillouiae (Acinetobacter genomosp. 11).